We begin with the raw amino-acid sequence, 303 residues long: Bifunctional protein FolD (303 aa).

NADP(+)-binding positions include 169-171 (GRG), Thr-196, and Val-237.

It belongs to the tetrahydrofolate dehydrogenase/cyclohydrolase family. Homodimer.

The catalysed reaction is (6R)-5,10-methylene-5,6,7,8-tetrahydrofolate + NADP(+) = (6R)-5,10-methenyltetrahydrofolate + NADPH. It catalyses the reaction (6R)-5,10-methenyltetrahydrofolate + H2O = (6R)-10-formyltetrahydrofolate + H(+). The protein operates within one-carbon metabolism; tetrahydrofolate interconversion. In terms of biological role, catalyzes the oxidation of 5,10-methylenetetrahydrofolate to 5,10-methenyltetrahydrofolate and then the hydrolysis of 5,10-methenyltetrahydrofolate to 10-formyltetrahydrofolate. This is Bifunctional protein FolD from Micrococcus luteus (strain ATCC 4698 / DSM 20030 / JCM 1464 / CCM 169 / CCUG 5858 / IAM 1056 / NBRC 3333 / NCIMB 9278 / NCTC 2665 / VKM Ac-2230) (Micrococcus lysodeikticus).